A 254-amino-acid chain; its full sequence is Hydrolase tropI (254 aa).

Residues Cys-141, Asp-187, and His-219 contribute to the active site.

Belongs to the dienelactone hydrolase family.

The protein operates within secondary metabolite biosynthesis. Hydrolase; part of the gene cluster that mediates the biosynthesis of the tropolone class of fungal maleic anhydrides. The pathway begins with the synthesis of 3-methylorcinaldehyde by the non-reducing polyketide synthase (PKS) tropA. 3-methylorcinaldehyde is the substrate for the FAD-dependent monooxygenase tropB to yield a dearomatized hydroxycyclohexadione. The 2-oxoglutarate-dependent dioxygenase tropC then performs the oxidative ring expansion to provide the first tropolone metabolite stipitaldehyde. Trop D converts stipitaldehyde into stipitacetal which is in turn converted to stipitalide by the short-chain dehydrogenase/reductase tropE. The next steps involve tropF, tropG, tropH, tropI and tropJ to form successive tropolone maleic anhydrides including stipitaldehydic, stipitatonic and stipitatic acids. The polypeptide is Hydrolase tropI (Talaromyces stipitatus (strain ATCC 10500 / CBS 375.48 / QM 6759 / NRRL 1006) (Penicillium stipitatum)).